A 264-amino-acid chain; its full sequence is MLMAVDIGNTQTVLGYFEGERLRASWRMTTEPYRSPDEVGAACAALFALRGLSLEDADAMIVSSVVPDLTGTYRHLAADILQVPFYAVGPEMDLGMENRYDDPSAVGADRLVNAVAARRYYGAPAIIADSGTATTVCAVDAGGAYRGGAILPGLYVSMDALASRTAKLPRVDLEEEPPRAIATNTPDSIRSGFIYGYAGAIDALIRRFKEELAAEGETEGLRVVATGGLSPVISRYCREIEVLDPDLTLKGLQVLYALNASRAR.

6–13 (DIGNTQTV) is a binding site for ATP. Residues Y100 and 107–110 (GADR) contribute to the substrate site. D109 functions as the Proton acceptor in the catalytic mechanism. D129 serves as a coordination point for K(+). Residue T132 participates in ATP binding. Residue T185 coordinates substrate.

This sequence belongs to the type III pantothenate kinase family. In terms of assembly, homodimer. NH4(+) is required as a cofactor. K(+) serves as cofactor.

It is found in the cytoplasm. The catalysed reaction is (R)-pantothenate + ATP = (R)-4'-phosphopantothenate + ADP + H(+). Its pathway is cofactor biosynthesis; coenzyme A biosynthesis; CoA from (R)-pantothenate: step 1/5. Its function is as follows. Catalyzes the phosphorylation of pantothenate (Pan), the first step in CoA biosynthesis. In Rubrobacter xylanophilus (strain DSM 9941 / JCM 11954 / NBRC 16129 / PRD-1), this protein is Type III pantothenate kinase.